Reading from the N-terminus, the 577-residue chain is Heavy metal-associated isoprenylated plant protein 34 (577 aa).

Positions L9 to E72 constitute an HMA domain. C20 and C23 together coordinate a metal cation. Gly residues predominate over residues G77–G87. Disordered regions lie at residues G77–Q136 and A150–G451. Positions N97–P106 are enriched in low complexity. The segment covering K118–H129 has biased composition (gly residues). Residues K168 to A177 show a composition bias toward basic and acidic residues. Residues D178 to E213 show a composition bias toward acidic residues. Positions H227–G244 are enriched in low complexity. Composition is skewed to gly residues over residues G245 to K254 and F266 to F281. Composition is skewed to basic and acidic residues over residues K294 to A326 and N344 to G358. Gly residues-rich tracts occupy residues K379–G392 and G420–G451. At C574 the chain carries Cysteine methyl ester. The S-farnesyl cysteine moiety is linked to residue C574. Residues S575–M577 constitute a propeptide, removed in mature form.

It belongs to the HIPP family.

Functionally, heavy-metal-binding protein. In Arabidopsis thaliana (Mouse-ear cress), this protein is Heavy metal-associated isoprenylated plant protein 34.